The chain runs to 213 residues: Triosephosphate isomerase (213 aa).

7 to 9 (NLK) contacts substrate. His-88 functions as the Electrophile in the catalytic mechanism. Glu-136 functions as the Proton acceptor in the catalytic mechanism. Ile-141 and Gly-174 together coordinate substrate.

It belongs to the triosephosphate isomerase family. Homotetramer; dimer of dimers.

Its subcellular location is the cytoplasm. It carries out the reaction D-glyceraldehyde 3-phosphate = dihydroxyacetone phosphate. It participates in carbohydrate biosynthesis; gluconeogenesis. The protein operates within carbohydrate degradation; glycolysis; D-glyceraldehyde 3-phosphate from glycerone phosphate: step 1/1. Involved in the gluconeogenesis. Catalyzes stereospecifically the conversion of dihydroxyacetone phosphate (DHAP) to D-glyceraldehyde-3-phosphate (G3P). This is Triosephosphate isomerase from Thermoplasma volcanium (strain ATCC 51530 / DSM 4299 / JCM 9571 / NBRC 15438 / GSS1).